The sequence spans 229 residues: Protein GrpE (229 aa).

The segment at Met-1–Gly-89 is disordered. A compositionally biased stretch (low complexity) spans Ala-24 to Asp-36. The span at Glu-39 to Ala-50 shows a compositional bias: basic and acidic residues. A compositionally biased stretch (low complexity) spans Lys-65–Ser-84.

It belongs to the GrpE family. In terms of assembly, homodimer.

It localises to the cytoplasm. Participates actively in the response to hyperosmotic and heat shock by preventing the aggregation of stress-denatured proteins, in association with DnaK and GrpE. It is the nucleotide exchange factor for DnaK and may function as a thermosensor. Unfolded proteins bind initially to DnaJ; upon interaction with the DnaJ-bound protein, DnaK hydrolyzes its bound ATP, resulting in the formation of a stable complex. GrpE releases ADP from DnaK; ATP binding to DnaK triggers the release of the substrate protein, thus completing the reaction cycle. Several rounds of ATP-dependent interactions between DnaJ, DnaK and GrpE are required for fully efficient folding. The polypeptide is Protein GrpE (Bifidobacterium animalis subsp. lactis (strain AD011)).